A 209-amino-acid chain; its full sequence is Uracil phosphoribosyltransferase (209 aa).

Residues arginine 79, arginine 104, and 131–139 each bind 5-phospho-alpha-D-ribose 1-diphosphate; that span reads DPMLATGGS. Residues isoleucine 194 and 199-201 each bind uracil; that span reads GDA. Position 200 (aspartate 200) interacts with 5-phospho-alpha-D-ribose 1-diphosphate.

This sequence belongs to the UPRTase family. The cofactor is Mg(2+).

The enzyme catalyses UMP + diphosphate = 5-phospho-alpha-D-ribose 1-diphosphate + uracil. Its pathway is pyrimidine metabolism; UMP biosynthesis via salvage pathway; UMP from uracil: step 1/1. Its activity is regulated as follows. Allosterically activated by GTP. Catalyzes the conversion of uracil and 5-phospho-alpha-D-ribose 1-diphosphate (PRPP) to UMP and diphosphate. The polypeptide is Uracil phosphoribosyltransferase (Streptococcus equi subsp. zooepidemicus (strain MGCS10565)).